A 539-amino-acid polypeptide reads, in one-letter code: MAKDLKFSEDARQAMLRGVDKLANAVKVTIGPKGRNVVLDKDYTTPLITNDGVTIAKEIELEDPYENMGAKLVQEVANKTNEIAGDGTTTATVLAQSMIQEGLKNVTSGANPVGLRQGIDKAVQVAIEALHEISQKVENKNEIAQVGAISAADEEIGRYISEAMDKVGNDGVITIEESNGFNTELEVAEGMQFDRGYQSPYMVTDSDKMIAELERPYILVTDKKISSFQDILPLLEQVVQASRPILIVADEVEGDALTNIVLNRMRGTFTAVAVKAPGFGDRRKAMLEDLAILTGAQVITDDLGLELKDASLDMLGTANKVEVTKDHTTVVDGNGDENNIDARVGQIKAQIEETDSECDKEKLQERVAKLAGGVAVIKVGAASDTELKERKLRIEDALNSTRAAVEEGIVAGGGTALVNIYQKVSEIKAEGDVETGVNIVLKALQAPVRQIAENAGLEGSIIVERLKHAEAGVGFNAATNEWVNMLEEGIVDPTKVTRSALQHAASVAAMFLTTEAVVASIPEPENNEQPGMGGMPGMM.

ATP-binding positions include 29 to 32, 86 to 90, Gly-413, 476 to 478, and Asp-492; these read TIGP, DGTTT, and NAA.

This sequence belongs to the chaperonin (HSP60) family. As to quaternary structure, forms a cylinder of 14 subunits composed of two heptameric rings stacked back-to-back. Interacts with the co-chaperonin GroES.

It is found in the cytoplasm. The enzyme catalyses ATP + H2O + a folded polypeptide = ADP + phosphate + an unfolded polypeptide.. Together with its co-chaperonin GroES, plays an essential role in assisting protein folding. The GroEL-GroES system forms a nano-cage that allows encapsulation of the non-native substrate proteins and provides a physical environment optimized to promote and accelerate protein folding. This Staphylococcus epidermidis protein is Chaperonin GroEL.